We begin with the raw amino-acid sequence, 648 residues long: Protein teflon (648 aa).

The segment at 33-56 (LYCHFCRDLFTQLPEFLRHLQGAH) adopts a C2H2-type 1 zinc-finger fold. Disordered regions lie at residues 76 to 127 (SGEQ…GSQN) and 146 to 170 (EHINDKLKPENGGFKGPRKKANSES). Residues 85–94 (VGHNSSSSDS) are compositionally biased toward polar residues. The segment covering 96–107 (GLAKSEDSRATE) has biased composition (basic and acidic residues). Residues 598-620 (YFCKCCDDIFTLNEDYIRHLVSQ) form a C2H2-type 2; degenerate zinc finger. The segment at 624–647 (YQCTKCIKTFKYQGHYDKHMRTVH) adopts a C2H2-type 3 zinc-finger fold.

It belongs to the Teflon family.

The protein resides in the nucleus. It localises to the chromosome. Functionally, specifically required in males for proper segregation of autosomal bivalents at meiosis I. Expression is required in the male germ line prior to spermatocyte stage S4. May have a role as a bridging molecule maintaining adhesion to hold autosome bivalents together via heterochromatic connections. In Drosophila yakuba (Fruit fly), this protein is Protein teflon.